The following is a 352-amino-acid chain: Holliday junction branch migration complex subunit RuvB (352 aa).

Residues 4–185 (PDRLISAVSG…FGIVQRLEFY (182 aa)) are large ATPase domain (RuvB-L). Residues Ile-24, Arg-25, Gly-66, Lys-69, Thr-70, Thr-71, 132–134 (EDF), Arg-175, Tyr-185, and Arg-222 contribute to the ATP site. Thr-70 lines the Mg(2+) pocket. The small ATPAse domain (RuvB-S) stretch occupies residues 186–256 (NVEDLATIVS…IADKALNLLD (71 aa)). The tract at residues 259–352 (ERGFDHLDRR…TDLFTSEDGN (94 aa)) is head domain (RuvB-H). Arg-295, Arg-314, and Arg-319 together coordinate DNA.

Belongs to the RuvB family. In terms of assembly, homohexamer. Forms an RuvA(8)-RuvB(12)-Holliday junction (HJ) complex. HJ DNA is sandwiched between 2 RuvA tetramers; dsDNA enters through RuvA and exits via RuvB. An RuvB hexamer assembles on each DNA strand where it exits the tetramer. Each RuvB hexamer is contacted by two RuvA subunits (via domain III) on 2 adjacent RuvB subunits; this complex drives branch migration. In the full resolvosome a probable DNA-RuvA(4)-RuvB(12)-RuvC(2) complex forms which resolves the HJ.

It localises to the cytoplasm. The enzyme catalyses ATP + H2O = ADP + phosphate + H(+). In terms of biological role, the RuvA-RuvB-RuvC complex processes Holliday junction (HJ) DNA during genetic recombination and DNA repair, while the RuvA-RuvB complex plays an important role in the rescue of blocked DNA replication forks via replication fork reversal (RFR). RuvA specifically binds to HJ cruciform DNA, conferring on it an open structure. The RuvB hexamer acts as an ATP-dependent pump, pulling dsDNA into and through the RuvAB complex. RuvB forms 2 homohexamers on either side of HJ DNA bound by 1 or 2 RuvA tetramers; 4 subunits per hexamer contact DNA at a time. Coordinated motions by a converter formed by DNA-disengaged RuvB subunits stimulates ATP hydrolysis and nucleotide exchange. Immobilization of the converter enables RuvB to convert the ATP-contained energy into a lever motion, pulling 2 nucleotides of DNA out of the RuvA tetramer per ATP hydrolyzed, thus driving DNA branch migration. The RuvB motors rotate together with the DNA substrate, which together with the progressing nucleotide cycle form the mechanistic basis for DNA recombination by continuous HJ branch migration. Branch migration allows RuvC to scan DNA until it finds its consensus sequence, where it cleaves and resolves cruciform DNA. This is Holliday junction branch migration complex subunit RuvB from Pseudomonas aeruginosa (strain LESB58).